Here is a 427-residue protein sequence, read N- to C-terminus: 3-phosphoshikimate 1-carboxyvinyltransferase (427 aa).

Positions 22, 23, and 27 each coordinate 3-phosphoshikimate. A phosphoenolpyruvate-binding site is contributed by Lys22. Phosphoenolpyruvate contacts are provided by Gly96 and Arg124. 3-phosphoshikimate-binding residues include Ser169, Ser170, Gln171, Ser197, Asp313, Asn336, and Lys340. Gln171 contacts phosphoenolpyruvate. Asp313 serves as the catalytic Proton acceptor. Residues Arg344, Arg386, and Lys411 each coordinate phosphoenolpyruvate.

It belongs to the EPSP synthase family. As to quaternary structure, monomer.

It is found in the cytoplasm. It carries out the reaction 3-phosphoshikimate + phosphoenolpyruvate = 5-O-(1-carboxyvinyl)-3-phosphoshikimate + phosphate. It functions in the pathway metabolic intermediate biosynthesis; chorismate biosynthesis; chorismate from D-erythrose 4-phosphate and phosphoenolpyruvate: step 6/7. Its function is as follows. Catalyzes the transfer of the enolpyruvyl moiety of phosphoenolpyruvate (PEP) to the 5-hydroxyl of shikimate-3-phosphate (S3P) to produce enolpyruvyl shikimate-3-phosphate and inorganic phosphate. This chain is 3-phosphoshikimate 1-carboxyvinyltransferase, found in Escherichia coli O6:H1 (strain CFT073 / ATCC 700928 / UPEC).